The primary structure comprises 326 residues: Vitamin B12 import system permease protein BtuC (326 aa).

Transmembrane regions (helical) follow at residues 19–39 (LSVL…LWIL), 61–81 (LAVL…QALF), 88–108 (PGLL…VLLG), 112–132 (LPNW…TLIL), 146–166 (LLAG…AIYF), 184–204 (GGVD…LLWI), 240–260 (GWMV…GLVI), 274–294 (VLLP…DIVA), and 302–322 (ELPI…WLLL).

It belongs to the binding-protein-dependent transport system permease family. FecCD subfamily. In terms of assembly, the complex is composed of two ATP-binding proteins (BtuD), two transmembrane proteins (BtuC) and a solute-binding protein (BtuF).

The protein resides in the cell inner membrane. In terms of biological role, part of the ABC transporter complex BtuCDF involved in vitamin B12 import. Involved in the translocation of the substrate across the membrane. The chain is Vitamin B12 import system permease protein BtuC from Escherichia coli O127:H6 (strain E2348/69 / EPEC).